The chain runs to 1389 residues: DNA-directed RNA polymerase subunit beta'' (1389 aa).

4 residues coordinate Zn(2+): cysteine 224, cysteine 295, cysteine 302, and cysteine 305.

Belongs to the RNA polymerase beta' chain family. RpoC2 subfamily. In terms of assembly, in plastids the minimal PEP RNA polymerase catalytic core is composed of four subunits: alpha, beta, beta', and beta''. When a (nuclear-encoded) sigma factor is associated with the core the holoenzyme is formed, which can initiate transcription. Zn(2+) serves as cofactor.

The protein resides in the plastid. The protein localises to the chloroplast. The catalysed reaction is RNA(n) + a ribonucleoside 5'-triphosphate = RNA(n+1) + diphosphate. In terms of biological role, DNA-dependent RNA polymerase catalyzes the transcription of DNA into RNA using the four ribonucleoside triphosphates as substrates. In Morus indica (Mulberry), this protein is DNA-directed RNA polymerase subunit beta''.